A 257-amino-acid chain; its full sequence is Large ribosomal subunit protein uL2 (257 aa).

A disordered region spans residues 207 to 231 (VEHPFGGGNHQHIGKPSTIRRDAPA).

This sequence belongs to the universal ribosomal protein uL2 family. In terms of assembly, component of the large ribosomal subunit.

It localises to the cytoplasm. Its function is as follows. Component of the large ribosomal subunit. The ribosome is a large ribonucleoprotein complex responsible for the synthesis of proteins in the cell. The polypeptide is Large ribosomal subunit protein uL2 (rpl8) (Xenopus tropicalis (Western clawed frog)).